Reading from the N-terminus, the 607-residue chain is Elongation factor 4 (607 aa).

The tr-type G domain maps to 11–193 (KKIRNFSIIA…QIVELVPPPT (183 aa)). Residues 23-28 (DHGKST) and 140-143 (NKID) contribute to the GTP site.

It belongs to the TRAFAC class translation factor GTPase superfamily. Classic translation factor GTPase family. LepA subfamily.

The protein resides in the cell membrane. The enzyme catalyses GTP + H2O = GDP + phosphate + H(+). Required for accurate and efficient protein synthesis under certain stress conditions. May act as a fidelity factor of the translation reaction, by catalyzing a one-codon backward translocation of tRNAs on improperly translocated ribosomes. Back-translocation proceeds from a post-translocation (POST) complex to a pre-translocation (PRE) complex, thus giving elongation factor G a second chance to translocate the tRNAs correctly. Binds to ribosomes in a GTP-dependent manner. In Exiguobacterium sp. (strain ATCC BAA-1283 / AT1b), this protein is Elongation factor 4.